The sequence spans 782 residues: Endonuclease MutS2 (782 aa).

336–343 contacts ATP; that stretch reads GPNTGGKT. The region spanning 707-782 is the Smr domain; sequence LDLRGYRYEE…GFGVTVAELK (76 aa).

This sequence belongs to the DNA mismatch repair MutS family. MutS2 subfamily. As to quaternary structure, homodimer. Binds to stalled ribosomes, contacting rRNA.

In terms of biological role, endonuclease that is involved in the suppression of homologous recombination and thus may have a key role in the control of bacterial genetic diversity. Functionally, acts as a ribosome collision sensor, splitting the ribosome into its 2 subunits. Detects stalled/collided 70S ribosomes which it binds and splits by an ATP-hydrolysis driven conformational change. Acts upstream of the ribosome quality control system (RQC), a ribosome-associated complex that mediates the extraction of incompletely synthesized nascent chains from stalled ribosomes and their subsequent degradation. Probably generates substrates for RQC. In Staphylococcus carnosus (strain TM300), this protein is Endonuclease MutS2.